A 144-amino-acid chain; its full sequence is Ribosome-binding factor A (144 aa).

The disordered stretch occupies residues 120 to 144 (DKRRMAESGREEDDAAPDETTEDNA). Positions 129–144 (REEDDAAPDETTEDNA) are enriched in acidic residues.

The protein belongs to the RbfA family. In terms of assembly, monomer. Binds 30S ribosomal subunits, but not 50S ribosomal subunits or 70S ribosomes.

Its subcellular location is the cytoplasm. Functionally, one of several proteins that assist in the late maturation steps of the functional core of the 30S ribosomal subunit. Associates with free 30S ribosomal subunits (but not with 30S subunits that are part of 70S ribosomes or polysomes). Required for efficient processing of 16S rRNA. May interact with the 5'-terminal helix region of 16S rRNA. The sequence is that of Ribosome-binding factor A from Aeromonas hydrophila subsp. hydrophila (strain ATCC 7966 / DSM 30187 / BCRC 13018 / CCUG 14551 / JCM 1027 / KCTC 2358 / NCIMB 9240 / NCTC 8049).